Here is a 480-residue protein sequence, read N- to C-terminus: Aspartyl/glutamyl-tRNA(Asn/Gln) amidotransferase subunit B (480 aa).

The protein belongs to the GatB/GatE family. GatB subfamily. Heterotrimer of A, B and C subunits.

The enzyme catalyses L-glutamyl-tRNA(Gln) + L-glutamine + ATP + H2O = L-glutaminyl-tRNA(Gln) + L-glutamate + ADP + phosphate + H(+). The catalysed reaction is L-aspartyl-tRNA(Asn) + L-glutamine + ATP + H2O = L-asparaginyl-tRNA(Asn) + L-glutamate + ADP + phosphate + 2 H(+). In terms of biological role, allows the formation of correctly charged Asn-tRNA(Asn) or Gln-tRNA(Gln) through the transamidation of misacylated Asp-tRNA(Asn) or Glu-tRNA(Gln) in organisms which lack either or both of asparaginyl-tRNA or glutaminyl-tRNA synthetases. The reaction takes place in the presence of glutamine and ATP through an activated phospho-Asp-tRNA(Asn) or phospho-Glu-tRNA(Gln). The polypeptide is Aspartyl/glutamyl-tRNA(Asn/Gln) amidotransferase subunit B (Streptococcus pneumoniae (strain Hungary19A-6)).